We begin with the raw amino-acid sequence, 262 residues long: uncharacterized protein (262 aa).

Residues 6 to 70 (LRINQFLAHY…LKNKKFSVLV (65 aa)) form the S4 RNA-binding domain. Catalysis depends on Asp-108, which acts as the Nucleophile.

It belongs to the pseudouridine synthase RsuA family.

It catalyses the reaction a uridine in RNA = a pseudouridine in RNA. This is an uncharacterized protein from Helicobacter pylori (strain J99 / ATCC 700824) (Campylobacter pylori J99).